Consider the following 153-residue polypeptide: MTLGAATANDPIDSTLASPSRDEQRRQANQAAFSRDLEFLSSLANPYYLNHLALSGALSSPSFKRYLKYLDYFRHPKYVKYLHYPQALHFLDLLQNEEEFRLACRDPAFAGEVMAKQIGHWATWRDPENAAGQEQDEAGEQGEARETTGGQTA.

Disordered regions lie at residues 1–28 (MTLGAATANDPIDSTLASPSRDEQRRQA) and 125–153 (RDPENAAGQEQDEAGEQGEARETTGGQTA).

Belongs to the Mediator complex subunit 31 family. In terms of assembly, component of the Mediator complex.

It is found in the nucleus. In terms of biological role, component of the Mediator complex, a coactivator involved in the regulated transcription of nearly all RNA polymerase II-dependent genes. Mediator functions as a bridge to convey information from gene-specific regulatory proteins to the basal RNA polymerase II transcription machinery. Mediator is recruited to promoters by direct interactions with regulatory proteins and serves as a scaffold for the assembly of a functional preinitiation complex with RNA polymerase II and the general transcription factors. This Mycosarcoma maydis (Corn smut fungus) protein is Mediator of RNA polymerase II transcription subunit 31 (SOH1).